The chain runs to 91 residues: Small ribosomal subunit protein uS15 (91 aa).

Belongs to the universal ribosomal protein uS15 family. Part of the 30S ribosomal subunit. Forms a bridge to the 50S subunit in the 70S ribosome, contacting the 23S rRNA.

Functionally, one of the primary rRNA binding proteins, it binds directly to 16S rRNA where it helps nucleate assembly of the platform of the 30S subunit by binding and bridging several RNA helices of the 16S rRNA. Its function is as follows. Forms an intersubunit bridge (bridge B4) with the 23S rRNA of the 50S subunit in the ribosome. This chain is Small ribosomal subunit protein uS15, found in Rickettsia prowazekii (strain Madrid E).